Consider the following 350-residue polypeptide: D-alanine--D-alanine ligase (350 aa).

In terms of domain architecture, ATP-grasp spans 133–334 (NDIFELNKIP…VSEVFDNLIG (202 aa)). An ATP-binding site is contributed by 161–216 (FEKTSKAVYVKPCNAGSSVGVMRAETEEELEKAIQNAFQYDRRILVEEEIIGPELQ). Mg(2+)-binding residues include aspartate 288, glutamate 300, and asparagine 302.

Belongs to the D-alanine--D-alanine ligase family. Requires Mg(2+) as cofactor. Mn(2+) serves as cofactor.

The protein localises to the cytoplasm. The catalysed reaction is 2 D-alanine + ATP = D-alanyl-D-alanine + ADP + phosphate + H(+). The protein operates within cell wall biogenesis; peptidoglycan biosynthesis. Cell wall formation. The sequence is that of D-alanine--D-alanine ligase from Finegoldia magna (strain ATCC 29328 / DSM 20472 / WAL 2508) (Peptostreptococcus magnus).